The following is a 179-amino-acid chain: Stathmin-2 (179 aa).

The tract at residues 1–26 is membrane attachment; that stretch reads MAKTAMAYKEKMKELSMLSLICSCFY. Serine 16 is subject to Phosphoserine. 2 S-palmitoyl cysteine lipidation sites follow: cysteine 22 and cysteine 24. The SLD domain occupies 38–179; the sequence is DDMEVKQINK…NKELQVELSG (142 aa). The segment at 39–96 is regulatory/phosphorylation domain; that stretch reads DMEVKQINKRASGQAFELILKPPSPISEAPRTLASPKKKDLSLEEIQKKLEAAEERRK. Phosphoserine occurs at positions 50, 62, 73, and 97. The stretch at 75 to 179 forms a coiled coil; sequence KKKDLSLEEI…NKELQVELSG (105 aa).

It belongs to the stathmin family. Interacts with MAPK8. Interacts with ITM2C. Interacts with KIFBP. Interacts (via the N-terminal region) with CIB1 (via C-terminal region); the interaction is direct, occurs in a calcium-dependent manner and attenuates the neurite outgrowth inhibition of STMN2. Post-translationally, sumoylated. In terms of processing, phosphorylated mostly by MAPK8, but also by MAPK9 and MAPK10 in the developing brain cortex. N-terminal palmitoylation promotes specific anchoring to the cytosolic leaflet of Golgi membranes and subsequent vesicular trafficking along dendrites and axons. Neuronal Stathmins are substrates for palmitoyltransferases ZDHHC3, ZDHHC7 and ZDHHC15. As to expression, neuron specific.

It localises to the cytoplasm. Its subcellular location is the perinuclear region. The protein resides in the cell projection. It is found in the growth cone. The protein localises to the membrane. It localises to the axon. Its subcellular location is the golgi apparatus. The protein resides in the endosome. It is found in the lamellipodium. Functionally, regulator of microtubule stability. When phosphorylated by MAPK8, stabilizes microtubules and consequently controls neurite length in cortical neurons. In the developing brain, negatively regulates the rate of exit from multipolar stage and retards radial migration from the ventricular zone. The polypeptide is Stathmin-2 (STMN2) (Homo sapiens (Human)).